Here is a 315-residue protein sequence, read N- to C-terminus: 3-chlorobenzoate-3,4-dioxygenase reductase subunit (315 aa).

1–103 (MVAIDQHDTY…GATTRISAPR (103 aa)) provides a ligand contact to FMN. The FAD-binding FR-type domain occupies 7–109 (HDTYSVRVIS…SAPRNAFALD (103 aa)). Residues 228-315 (NEFTVNLARS…ALSPELTLDL (88 aa)) form the 2Fe-2S ferredoxin-type domain. 4 residues coordinate [2Fe-2S] cluster: C264, C269, C272, and C302.

It belongs to the PDR/VanB family. As to quaternary structure, this dioxygenase system consists of two proteins: phthalate oxygenase and phthalate oxygenase reductase. FMN is required as a cofactor.

This is 3-chlorobenzoate-3,4-dioxygenase reductase subunit (cbaB) from Comamonas testosteroni (Pseudomonas testosteroni).